We begin with the raw amino-acid sequence, 569 residues long: MRDNTSPISVILVSSGSRGNKLLFRYPFQRSQEHPASQTSKPRSRYAASNTGDHADEQDGDSRFSDVILATILATKSEMCGQKFELKIDNVRFVGHPTLLQHALGQISKTDPSPKREAPTMILFNVVFALRANADPSVINCLHNLSRRIATVLQHEERRCQYLTREAKLILALQDEVSAMADGNEGPQSPFHHILPKCKLARDLKEAYDSLCTSGVVRLHINSWLEVSFCLPHKIHYAASSLIPPEAIERSLKAIRPYHALLLLSDEKSLLGELPIDCSPALVRVIKTTSAVKNLQQLAQDADLALLQVFQLAAHLVYWGKAIIIYPLCENNVYMLSPNASVCLYSPLAEQFSHQFPSHDLPSVLAKFSLPVSLSEFRNPLAPAVQETQLIQMVVWMLQRRLLIQLHTYVCLMASPSEEEPRPREDDVPFTARVGGRSLSTPNALSFGSPTSSDDMTLTSPSMDNSSAELLPSGDSPLNQRMTENLLASLSEHERAAILSVPAAQNPEDLRMFARLLHYFRGRHHLEEIMYNENTRRSQLLMLFDKFRSVLVVTTHEDPVIAVFQALLP.

Disordered stretches follow at residues 27 to 60 and 416 to 477; these read PFQRSQEHPASQTSKPRSRYAASNTGDHADEQDG and PSEE…GDSP. Composition is skewed to polar residues over residues 34-52 and 438-468; these read HPASQTSKPRSRYAASNTG and SLSTPNALSFGSPTSSDDMTLTSPSMDNSSA. Phosphoserine is present on Ser-476.

This sequence belongs to the NPR3 family. Within the GATOR complex, component of the GATOR1 subcomplex, made of DEPDC5, NPRL2 and NPRL3. GATOR1 mediates the strong interaction of the GATOR complex with small GTPases Rag (RagA/RRAGA, RagB/RRAGB, RagC/RRAGC and/or RagD/RRAGD) heterodimers. GATOR1 interacts with GPR155/LYCHOS; interaction takes place in presence of cholesterol and prevents interaction between GATOR1 and KICSTOR. Widely expressed. Expressed in the frontal lobe cortex as well as in the temporal, parietal, and occipital lobes.

The protein resides in the lysosome membrane. Its function is as follows. As a component of the GATOR1 complex functions as an inhibitor of the amino acid-sensing branch of the mTORC1 pathway. In response to amino acid depletion, the GATOR1 complex has GTPase activating protein (GAP) activity and strongly increases GTP hydrolysis by RagA/RRAGA (or RagB/RRAGB) within heterodimeric Rag complexes, thereby turning them into their inactive GDP-bound form, releasing mTORC1 from lysosomal surface and inhibiting mTORC1 signaling. In the presence of abundant amino acids, the GATOR1 complex is negatively regulated by GATOR2, the other GATOR subcomplex, in this amino acid-sensing branch of the TORC1 pathway. This chain is GATOR1 complex protein NPRL3, found in Homo sapiens (Human).